Reading from the N-terminus, the 389-residue chain is NADH-dependent butanol dehydrogenase A (389 aa).

The protein belongs to the iron-containing alcohol dehydrogenase family. Homodimer.

The protein operates within alcohol metabolism; butanol biosynthesis. The sequence is that of NADH-dependent butanol dehydrogenase A (bdhA) from Clostridium acetobutylicum (strain ATCC 824 / DSM 792 / JCM 1419 / IAM 19013 / LMG 5710 / NBRC 13948 / NRRL B-527 / VKM B-1787 / 2291 / W).